Reading from the N-terminus, the 1394-residue chain is ATP-dependent permease AUS1 (1394 aa).

Topologically, residues 1-420 are cytoplasmic; that stretch reads MSISKYFTPV…PLTTIGSYSR (420 aa). Residues 33–273 form the ABC transporter 1 domain; sequence KKSYDAEDSM…FRDTLGIEKD (241 aa). The next 6 helical transmembrane spans lie at 421–443, 468–490, 497–519, 529–551, 558–575, and 636–658; these read GSLT…PIAF, TVFD…YFLA, ARFF…LFAL, VANL…VIYL, FVWI…EAIL, and VWRN…LFAS. At 659–1080 the chain is on the cytoplasmic side; it reads QYIKPYFNKD…QYICTKRDMT (422 aa). Positions 751–978 constitute an ABC transporter 2 domain; it reads ISWKNINYTV…YFMSHDNTLV (228 aa). 782 to 789 contacts ATP; that stretch reads GESGAGKT. 6 helical membrane passes run 1081-1103, 1107-1129, 1156-1178, 1193-1215, 1224-1246, and 1346-1368; these read YVMA…FWHI, IIGL…PLIN, VLLL…LFFV, AGVF…LWLI, AAVF…QPYS, and FGIE…YLTY. Residues 1369–1394 lie on the Cytoplasmic side of the membrane; sequence VARIWPKVFKIITKVIPHRGKKPVQN.

This sequence belongs to the ABC transporter superfamily. ABCG family. PDR (TC 3.A.1.205) subfamily.

It is found in the membrane. Its function is as follows. Transporter involved in the uptake of sterol. The protein is ATP-dependent permease AUS1 (AUS1) of Saccharomyces cerevisiae (strain ATCC 204508 / S288c) (Baker's yeast).